Here is a 426-residue protein sequence, read N- to C-terminus: Antigen EM13 (426 aa).

The 240-residue stretch at 1–240 (MIQERADIEK…TVAKVDADAD (240 aa)) folds into the F-BAR domain. Disordered stretches follow at residues 287 to 315 (LTSL…ISTS) and 350 to 369 (ISKE…FVDD). Over residues 305-315 (TTDSGSNISTS) the composition is skewed to polar residues. One can recognise an SH3 domain in the interval 371–426 (RPGVPIRALYDYVGVEADELSFNSGDLFEKLEDEDEQGWCKGRKDGRVGLYPRQLR).

This is Antigen EM13 (EM13) from Echinococcus multilocularis (Fox tapeworm).